The sequence spans 419 residues: Divinyl chlorophyllide a 8-vinyl-reductase, chloroplastic (419 aa).

The transit peptide at 1 to 71 (MSICSTVGAG…PIVVSSTPVV (71 aa)) directs the protein to the chloroplast.

It is found in the plastid. Its subcellular location is the chloroplast. The catalysed reaction is protochlorophyllide a + NADP(+) = 3,8-divinyl protochlorophyllide a + NADPH + H(+). It participates in porphyrin-containing compound metabolism; chlorophyll biosynthesis. In terms of biological role, catalyzes the conversion of divinyl chlorophyllide to monovinyl chlorophyllide. Reduces the 8-vinyl group of the tetrapyrrole to an ethyl group using NADPH as the reductant. The best substrate is (3,8-divinyl)-chlorophyllide a (DV-Chlidea). Very low activity with (3,8-divinyl)-protochlorophyllide a (DV-Pchlidea) and (3,8-divinyl)-magnesium-protoporphyrin IX monomethyl ester (DV-MPE). No activity with (3,8-divinyl)-magnesium-protoporphyrin IX (DV-Mg-Proto) and (3,8-divinyl)-chlorophyll a (DV-Chla). This Cucumis sativus (Cucumber) protein is Divinyl chlorophyllide a 8-vinyl-reductase, chloroplastic (DVR).